The following is a 619-amino-acid chain: UPF0329 protein ECU01_0100/ECU01_1510/ECU08_0030 (619 aa).

Residues 350–384 (REEREKREKREKREESKGRGKRGAGEAKEESKEED) are compositionally biased toward basic and acidic residues. Residues 350–428 (REEREKREKR…GKRKGDGHHY (79 aa)) are disordered. Residues 385–399 (GKEEEGVEAEEEESA) are compositionally biased toward acidic residues. Residues 411 to 428 (ARRKKSLKGKRKGDGHHY) are compositionally biased toward basic residues.

The protein belongs to the UPF0329 family.

This chain is UPF0329 protein ECU01_0100/ECU01_1510/ECU08_0030, found in Encephalitozoon cuniculi (strain GB-M1) (Microsporidian parasite).